A 242-amino-acid chain; its full sequence is tRNA pseudouridine synthase A (242 aa).

The Nucleophile role is filled by Asp51. Position 107 (Tyr107) interacts with substrate.

This sequence belongs to the tRNA pseudouridine synthase TruA family. As to quaternary structure, homodimer.

The catalysed reaction is uridine(38/39/40) in tRNA = pseudouridine(38/39/40) in tRNA. In terms of biological role, formation of pseudouridine at positions 38, 39 and 40 in the anticodon stem and loop of transfer RNAs. In Helicobacter pylori (strain G27), this protein is tRNA pseudouridine synthase A.